We begin with the raw amino-acid sequence, 280 residues long: Nucleotide-binding protein Swoo_4243 (280 aa).

8–15 (GRSGSGKS) is an ATP binding site. Position 56-59 (56-59 (DVRN)) interacts with GTP.

It belongs to the RapZ-like family.

Functionally, displays ATPase and GTPase activities. The protein is Nucleotide-binding protein Swoo_4243 of Shewanella woodyi (strain ATCC 51908 / MS32).